The sequence spans 522 residues: F-box only protein 7 (522 aa).

2 disordered regions span residues M1–E20 and P85–V128. Residues M1–P88 are ubiquitin-like. Polar residues predominate over residues L87–N114. The important for interaction with PINK1 stretch occupies residues D92–T129. The interval T129–M169 is important for interaction with CDK6. An important for dimerization and interaction with PSMF1 region spans residues P180–L324. Residues V329–L375 enclose the F-box domain. Residues R381–L522 are important for interaction with CDK6. An omega-N-methylarginine mark is found at R431 and R451. The interval D459–L522 is disordered. The RFDP motif signature appears at R481–P484. Residue R518 is modified to Asymmetric dimethylarginine.

Part of the SCF (SKP1-CUL1-F-box) E3 ubiquitin-protein ligase complex SCF(FBXO7) formed of CUL1, SKP1, RBX1 and FBXO7. Interacts via its C-terminal proline-rich region with DLGAP5. Interacts with BIRC2. Interacts with CDK6 and promotes its interaction with D-type cyclin. Interacts (via the N-terminal Ubl domain) with PRKN. Interacts (via N-terminal region) with PINK1. Interacts with PSMF1.

It localises to the cytoplasm. The protein localises to the nucleus. The protein resides in the mitochondrion. Its subcellular location is the cytosol. The protein operates within protein modification; protein ubiquitination. Its function is as follows. Substrate recognition component of a SCF (SKP1-CUL1-F-box protein) E3 ubiquitin-protein ligase complex which mediates the ubiquitination and subsequent proteasomal degradation of target proteins and plays a role in several biological processes such as cell cycle, cell proliferation, or maintenance of chromosome stability. Recognizes and ubiquitinates BIRC2 and the cell cycle regulator DLGAP5. Plays a role downstream of PINK1 in the clearance of damaged mitochondria via selective autophagy (mitophagy) by targeting PRKN to dysfunctional depolarized mitochondria. Promotes MFN1 ubiquitination. Mediates the ubiquitination and proteasomal degradation of UXT isoform 2, thereby impairing the NF-kappa-B signaling pathway. Inhibits NF-kappa-B pathway also by promoting the ubiquitinatioin of TRAF2. Affects the assembly state and activity of the proteasome in the cells including neurons by ubiquitinating the proteasomal subunit PSMA2 via 'Lys-63'-linked polyubiquitin chains. Promotes 'Lys-48'-linked polyubiquitination SIRT7, leading to the hydrogen peroxide-induced cell death. The chain is F-box only protein 7 (Fbxo7) from Rattus norvegicus (Rat).